Consider the following 466-residue polypeptide: Arginine biosynthesis bifunctional protein ArgJ, mitochondrial (466 aa).

Thr-194, Lys-223, Thr-234, Glu-321, Asn-461, and Thr-466 together coordinate substrate. Thr-234 acts as the Nucleophile in catalysis.

Belongs to the ArgJ family. Heterodimer of an alpha and a beta chain. The alpha and beta chains are autoproteolytically processed from a single precursor protein within the mitochondrion.

Its subcellular location is the mitochondrion matrix. The enzyme catalyses N(2)-acetyl-L-ornithine + L-glutamate = N-acetyl-L-glutamate + L-ornithine. The catalysed reaction is L-glutamate + acetyl-CoA = N-acetyl-L-glutamate + CoA + H(+). Its pathway is amino-acid biosynthesis; L-arginine biosynthesis; L-ornithine and N-acetyl-L-glutamate from L-glutamate and N(2)-acetyl-L-ornithine (cyclic): step 1/1. It functions in the pathway amino-acid biosynthesis; L-arginine biosynthesis; N(2)-acetyl-L-ornithine from L-glutamate: step 1/4. In terms of biological role, catalyzes two activities which are involved in the cyclic version of arginine biosynthesis: the synthesis of acetylglutamate from glutamate and acetyl-CoA, and of ornithine by transacetylation between acetylornithine and glutamate. The sequence is that of Arginine biosynthesis bifunctional protein ArgJ, mitochondrial from Aspergillus flavus (strain ATCC 200026 / FGSC A1120 / IAM 13836 / NRRL 3357 / JCM 12722 / SRRC 167).